A 482-amino-acid chain; its full sequence is Early growth response protein 4 (482 aa).

Residues 274 to 357 (DLGEGAESLP…PPAKARRKGR (84 aa)) form a disordered region. The span at 280-290 (ESLPGLLTPPS) shows a compositional bias: low complexity. Gly residues predominate over residues 291–302 (GEGGSSGEGGEF). Residues 337 to 349 (PEPPVPPPAPFPP) show a composition bias toward pro residues. 3 C2H2-type zinc fingers span residues 376 to 400 (FACPVESCVRSFARSDELNRHLRIH), 406 to 428 (FQCRICLRNFSRSDHLTTHVRTH), and 434 to 456 (FACDVCGRRFARSDEKKRHSKVH).

It belongs to the EGR C2H2-type zinc-finger protein family. As to expression, expressed in brain. In the cerebellum and frontal cortex.

The protein resides in the nucleus. Transcriptional regulator. Recognizes and binds to the DNA sequence 5'-GCGGGGGCG-3' (GSG). Activates the transcription of target genes whose products are required for mitogenesis and differentiation. This is Early growth response protein 4 (EGR4) from Bos taurus (Bovine).